The chain runs to 160 residues: MPSFDIVSEVKMNEVLNAVDNANRELATRFDFRGVEASFELNKEEVKLEADADFQLKQMVEILRAALLKRNIENSSMDVGDSVHSGKRFHLTVKFKQGIDKEVAKKLVKLIKDSKIKVQAAIQGDEVRVTGKKRDDLQETMALVRGAELGQPMQFQNFRD.

It belongs to the YajQ family.

Functionally, nucleotide-binding protein. In Aeromonas hydrophila subsp. hydrophila (strain ATCC 7966 / DSM 30187 / BCRC 13018 / CCUG 14551 / JCM 1027 / KCTC 2358 / NCIMB 9240 / NCTC 8049), this protein is Nucleotide-binding protein AHA_1129.